The primary structure comprises 119 residues: Large ribosomal subunit protein bL20 (119 aa).

This sequence belongs to the bacterial ribosomal protein bL20 family.

Its function is as follows. Binds directly to 23S ribosomal RNA and is necessary for the in vitro assembly process of the 50S ribosomal subunit. It is not involved in the protein synthesizing functions of that subunit. In Methylocella silvestris (strain DSM 15510 / CIP 108128 / LMG 27833 / NCIMB 13906 / BL2), this protein is Large ribosomal subunit protein bL20.